Here is a 357-residue protein sequence, read N- to C-terminus: Alternative oxidase, mitochondrial (357 aa).

Residues 152–172 form a helical membrane-spanning segment; sequence LTRCIFLESIAGVPGAVASFI. The Fe cation site is built by glutamate 159, glutamate 198, and histidine 201. The chain crosses the membrane as a helical span at residues 218–238; that stretch reads IIYVGQGVFCNLFFLFYLANP. Glutamate 249, glutamate 304, and histidine 307 together coordinate Fe cation. A disordered region spans residues 330–357; it reads IPDLKEPQPESGLKVTKPHGWEKEELKL. The span at 348-357 shows a compositional bias: basic and acidic residues; that stretch reads HGWEKEELKL.

This sequence belongs to the alternative oxidase family. The cofactor is Fe cation.

It is found in the mitochondrion inner membrane. Catalyzes cyanide-resistant oxygen consumption. May increase respiration when the cytochrome respiratory pathway is restricted, or in response to low temperatures. The polypeptide is Alternative oxidase, mitochondrial (STO1) (Scheffersomyces stipitis (strain ATCC 58785 / CBS 6054 / NBRC 10063 / NRRL Y-11545) (Yeast)).